A 244-amino-acid chain; its full sequence is Small ribosomal subunit protein eS4 (244 aa).

Residues 37–123 (VPLAILLKYY…AKYKFVRIMN (87 aa)) form the S4 RNA-binding domain.

It belongs to the eukaryotic ribosomal protein eS4 family.

The protein is Small ribosomal subunit protein eS4 (rps4e) of Sulfolobus acidocaldarius (strain ATCC 33909 / DSM 639 / JCM 8929 / NBRC 15157 / NCIMB 11770).